A 438-amino-acid polypeptide reads, in one-letter code: Xylose isomerase (438 aa).

Catalysis depends on residues His100 and Asp103. Mg(2+) contacts are provided by Glu231, Glu267, His270, Asp295, Asp306, Asp308, and Asp338.

Belongs to the xylose isomerase family. In terms of assembly, homotetramer. Requires Mg(2+) as cofactor.

The protein localises to the cytoplasm. The catalysed reaction is alpha-D-xylose = alpha-D-xylulofuranose. In Thermoanaerobacter sp. (strain X514), this protein is Xylose isomerase.